We begin with the raw amino-acid sequence, 210 residues long: Imidazoleglycerol-phosphate dehydratase (210 aa).

It belongs to the imidazoleglycerol-phosphate dehydratase family.

The protein localises to the cytoplasm. The catalysed reaction is D-erythro-1-(imidazol-4-yl)glycerol 3-phosphate = 3-(imidazol-4-yl)-2-oxopropyl phosphate + H2O. It functions in the pathway amino-acid biosynthesis; L-histidine biosynthesis; L-histidine from 5-phospho-alpha-D-ribose 1-diphosphate: step 6/9. The sequence is that of Imidazoleglycerol-phosphate dehydratase from Mycobacterium marinum (strain ATCC BAA-535 / M).